The primary structure comprises 435 residues: Matrix extracellular phosphoglycoprotein (435 aa).

A signal peptide spans 1-16 (MQAVSVGLFLFSMTWA). N-linked (GlcNAc...) asparagine glycosylation is present at Asn71. Disordered stretches follow at residues 124-145 (LLQNSPGQSKHTPRARRSTHYL) and 166-435 (LLVR…SSGD). Positions 164–186 (PDLLVRGDNDVPPFSGDGQHFMH) are dentonin. Positions 169–171 (RGD) match the Cell attachment site motif. O-linked (Xyl...) (chondroitin sulfate) serine glycosylation occurs at Ser178. Basic and acidic residues-rich tracts occupy residues 267-278 (KFRELPGKEGNR) and 300-313 (SKEKVKGGSREHTG). The span at 337-346 (GNQVTLTESQ) shows a compositional bias: polar residues. Basic residues-rich tracts occupy residues 382-391 (AHRRTSHPTR) and 405-415 (RRPHPHRRVST). Residues 418–435 (RDSSESSSSGSSSESSGD) form an ASARM motif; interaction with PHEX region. Over residues 422-435 (ESSSSGSSSESSGD) the composition is skewed to low complexity.

This sequence belongs to the PF07175/osteoregulin family. Interacts (via ASARM motif) with PHEX; the interaction is zinc-dependent. Post-translationally, phosphorylated on serine residues in the ASARM motif; the phosphorylation is important for the inhibition of bone mineralization. In terms of processing, cleaved by CTSB/cathepsin B; the cleavage is blocked by metalloprotease PHEX. Expressed in osteoblasts and osteocytes.

It is found in the secreted. Its subcellular location is the extracellular space. The protein resides in the extracellular matrix. Its function is as follows. Regulates renal phosphate excretion. Regulates bone mineralization by osteoblasts and cartilage mineralization by chondrocytes. Regulates the mineralization of the extracellular matrix of the craniofacial complex, such as teeth, bone and cartilage. Increases dental pulp stem cell proliferation. This is Matrix extracellular phosphoglycoprotein from Rattus norvegicus (Rat).